The following is a 232-amino-acid chain: Ferric nitrobindin-like protein (232 aa).

Residues 1–10 (MSENETSKTG) are compositionally biased toward polar residues. The segment at 1–33 (MSENETSKTGGNAGVPGSGADAPSLSDSPAISG) is disordered. Residues 85–91 (GVWRGEG) carry the GXWXGXG motif.

The protein belongs to the nitrobindin family.

The sequence is that of Ferric nitrobindin-like protein from Corynebacterium efficiens (strain DSM 44549 / YS-314 / AJ 12310 / JCM 11189 / NBRC 100395).